A 248-amino-acid polypeptide reads, in one-letter code: Aquaporin Z (248 aa).

A run of 2 helical transmembrane segments spans residues 11–31 (FIGT…AAAF) and 36–56 (IGFA…AFAI). Residues 65-67 (NPA) carry the NPA 1 motif. The next 3 helical transmembrane spans lie at 87-107 (IAAQ…IAGG), 132-152 (LLAC…IILG), and 161-181 (GFAP…SIPV). The short motif at 187–189 (NPA) is the NPA 2 element. Residues 203–223 (IAELWLFWLAPIVGAALAGLF) form a helical membrane-spanning segment.

This sequence belongs to the MIP/aquaporin (TC 1.A.8) family. As to quaternary structure, homotetramer.

Its subcellular location is the cell inner membrane. It catalyses the reaction H2O(in) = H2O(out). In terms of biological role, channel that permits osmotically driven movement of water in both directions. It is involved in the osmoregulation and in the maintenance of cell turgor during volume expansion in rapidly growing cells. It mediates rapid entry or exit of water in response to abrupt changes in osmolarity. This is Aquaporin Z from Gloeobacter violaceus (strain ATCC 29082 / PCC 7421).